Consider the following 397-residue polypeptide: 1-deoxy-D-xylulose 5-phosphate reductoisomerase (397 aa).

7 residues coordinate NADPH: Thr-10, Gly-11, Ser-12, Ile-13, Gly-36, Asn-38, and Asn-128. Residue Lys-129 coordinates 1-deoxy-D-xylulose 5-phosphate. Glu-130 contacts NADPH. Asp-154 contributes to the Mn(2+) binding site. 1-deoxy-D-xylulose 5-phosphate-binding residues include Ser-155, Glu-156, Ser-180, and His-203. A Mn(2+)-binding site is contributed by Glu-156. Residue Gly-209 participates in NADPH binding. Residues Asn-221, Lys-222, and Glu-225 each contribute to the 1-deoxy-D-xylulose 5-phosphate site. Glu-225 contributes to the Mn(2+) binding site.

Belongs to the DXR family. Mg(2+) serves as cofactor. Mn(2+) is required as a cofactor.

The enzyme catalyses 2-C-methyl-D-erythritol 4-phosphate + NADP(+) = 1-deoxy-D-xylulose 5-phosphate + NADPH + H(+). It participates in isoprenoid biosynthesis; isopentenyl diphosphate biosynthesis via DXP pathway; isopentenyl diphosphate from 1-deoxy-D-xylulose 5-phosphate: step 1/6. In terms of biological role, catalyzes the NADPH-dependent rearrangement and reduction of 1-deoxy-D-xylulose-5-phosphate (DXP) to 2-C-methyl-D-erythritol 4-phosphate (MEP). This chain is 1-deoxy-D-xylulose 5-phosphate reductoisomerase, found in Solibacter usitatus (strain Ellin6076).